The chain runs to 355 residues: Protein RecA (355 aa).

Residue 67–74 (GPESSGKT) participates in ATP binding. Residues 335-355 (NSLVSDVESEDEGASESNEEF) are disordered. A compositionally biased stretch (acidic residues) spans 341–355 (VESEDEGASESNEEF).

Belongs to the RecA family.

The protein localises to the cytoplasm. Functionally, can catalyze the hydrolysis of ATP in the presence of single-stranded DNA, the ATP-dependent uptake of single-stranded DNA by duplex DNA, and the ATP-dependent hybridization of homologous single-stranded DNAs. It interacts with LexA causing its activation and leading to its autocatalytic cleavage. The sequence is that of Protein RecA from Sodalis glossinidius.